Reading from the N-terminus, the 371-residue chain is Putrescine N-methyltransferase 2 (371 aa).

Polar residues-rich tracts occupy residues 1-14 (MEVI…STIF) and 23-70 (GHQN…HDNG). The tract at residues 1-70 (MEVISTNTNG…QNGTISHDNG (70 aa)) is disordered. Residues 82 to 319 (PGWFSEFSAL…GVIGYMLCST (238 aa)) enclose the PABS domain. S-adenosyl-L-methionine-binding positions include Gln-113, Glu-188, and 219–220 (DG). Asp-238 functions as the Proton acceptor in the catalytic mechanism. Residue Tyr-307 coordinates S-adenosyl-L-methionine.

This sequence belongs to the class I-like SAM-binding methyltransferase superfamily. Spermidine/spermine synthase family. Mainly expressed in roots.

The catalysed reaction is putrescine + S-adenosyl-L-methionine = N-methylputrescine + S-adenosyl-L-homocysteine + H(+). It functions in the pathway alkaloid biosynthesis; nicotine biosynthesis. In terms of biological role, involved in the biosynthesis of pyridine alkaloid natural products, leading mainly to the production of anabasine, anatabine, nicotine and nornicotine, effective deterrents against herbivores with antiparasitic and pesticide properties (neurotoxins); nornicotine serves as the precursor in the synthesis of the carcinogen compound N'-nitrosonornicotine (NNN). Methyltransferase that mediates the conversion of putrescine to N-methylputrescine. This Nicotiana attenuata (Coyote tobacco) protein is Putrescine N-methyltransferase 2.